The chain runs to 101 residues: NAD(P)H-quinone oxidoreductase subunit 4L, chloroplastic (101 aa).

The next 3 helical transmembrane spans lie at 2–22 (MLEHVLVLSAYLFSIGIYGLI), 32–52 (MCLELILNAVNMNLVTFSDLF), and 61–81 (IFSIFVIAIAAAEAAIGPAIV).

Belongs to the complex I subunit 4L family. As to quaternary structure, NDH is composed of at least 16 different subunits, 5 of which are encoded in the nucleus.

The protein resides in the plastid. It localises to the chloroplast thylakoid membrane. The enzyme catalyses a plastoquinone + NADH + (n+1) H(+)(in) = a plastoquinol + NAD(+) + n H(+)(out). It carries out the reaction a plastoquinone + NADPH + (n+1) H(+)(in) = a plastoquinol + NADP(+) + n H(+)(out). Its function is as follows. NDH shuttles electrons from NAD(P)H:plastoquinone, via FMN and iron-sulfur (Fe-S) centers, to quinones in the photosynthetic chain and possibly in a chloroplast respiratory chain. The immediate electron acceptor for the enzyme in this species is believed to be plastoquinone. Couples the redox reaction to proton translocation, and thus conserves the redox energy in a proton gradient. The sequence is that of NAD(P)H-quinone oxidoreductase subunit 4L, chloroplastic from Nymphaea alba (White water-lily).